We begin with the raw amino-acid sequence, 232 residues long: MSNVDHAEIAKFEALAHRWWDRESEFKPLHDINPLRVNWIDERVNLAGKKVLDVGCGGGILSEAMAQRGATVTGIDMGEAPLAVAQLHQLESGVNVEYRQITAEALAEEMPEQFDVVTCLEMLEHVPDPSSVIRACFRMVKPGGQVFFSTINRNPKAYLFAIVGAEYIMKLLPRGTHDFKKFIRPSELGAWSRMAGLTVKDIIGLTYNPLTKHYKLAADVDVNYMIQTLREE.

S-adenosyl-L-methionine contacts are provided by arginine 36, glycine 55, aspartate 76, and leucine 120.

The protein belongs to the methyltransferase superfamily. UbiG/COQ3 family.

It carries out the reaction a 3-demethylubiquinol + S-adenosyl-L-methionine = a ubiquinol + S-adenosyl-L-homocysteine + H(+). The catalysed reaction is a 3-(all-trans-polyprenyl)benzene-1,2-diol + S-adenosyl-L-methionine = a 2-methoxy-6-(all-trans-polyprenyl)phenol + S-adenosyl-L-homocysteine + H(+). The protein operates within cofactor biosynthesis; ubiquinone biosynthesis. Functionally, O-methyltransferase that catalyzes the 2 O-methylation steps in the ubiquinone biosynthetic pathway. This is Ubiquinone biosynthesis O-methyltransferase from Pseudomonas fluorescens (strain Pf0-1).